The chain runs to 356 residues: Tyrosine recombinase XerS (356 aa).

One can recognise a Core-binding (CB) domain in the interval 16–121 (IMPWYVLDYY…ALSSLYKYLT (106 aa)). One can recognise a Tyr recombinase domain in the interval 169–354 (AFLDYVDKEY…VNDEQKNALD (186 aa)). Residues arginine 210, lysine 234, histidine 306, arginine 309, and histidine 332 contribute to the active site. The active-site O-(3'-phospho-DNA)-tyrosine intermediate is the tyrosine 341.

The protein belongs to the 'phage' integrase family. XerS subfamily.

It is found in the cytoplasm. With respect to regulation, ftsK is required for recombination. Site-specific tyrosine recombinase, which acts by catalyzing the cutting and rejoining of the recombining DNA molecules. Essential to convert dimers of the bacterial chromosome into monomers to permit their segregation at cell division. The sequence is that of Tyrosine recombinase XerS from Streptococcus pyogenes serotype M5 (strain Manfredo).